The sequence spans 249 residues: Phosphoribosylaminoimidazole-succinocarboxamide synthase (249 aa).

It belongs to the SAICAR synthetase family.

It carries out the reaction 5-amino-1-(5-phospho-D-ribosyl)imidazole-4-carboxylate + L-aspartate + ATP = (2S)-2-[5-amino-1-(5-phospho-beta-D-ribosyl)imidazole-4-carboxamido]succinate + ADP + phosphate + 2 H(+). It functions in the pathway purine metabolism; IMP biosynthesis via de novo pathway; 5-amino-1-(5-phospho-D-ribosyl)imidazole-4-carboxamide from 5-amino-1-(5-phospho-D-ribosyl)imidazole-4-carboxylate: step 1/2. The protein is Phosphoribosylaminoimidazole-succinocarboxamide synthase of Roseiflexus sp. (strain RS-1).